A 1512-amino-acid polypeptide reads, in one-letter code: Zinc finger protein 608 (1512 aa).

Disordered stretches follow at residues 1–23 (MSVNISTAGKGVDPNTVDTYDSG), 46–74 (QKFEMNNSTTTTSSSNSKDCGGPASSGAG), 89–237 (QASA…HLYG), 260–295 (VAAAGEVSKSAPDSGLMGNSMLVKKEEEEEESHRRI), and 417–545 (RFCE…FLDQ). Composition is skewed to low complexity over residues 51–74 (NNSTTTTSSSNSKDCGGPASSGAG) and 151–185 (SALGQSVSSGGSGNPNSNSTSTSTSAATAGAGSCG). Basic and acidic residues predominate over residues 201–218 (AKRDKDAGKSRKDKHDLL). A compositionally biased stretch (polar residues) spans 220–230 (GHQNGSGSQAP). Low complexity predominate over residues 260–270 (VAAAGEVSKSA). Residues 278–304 (NSMLVKKEEEEEESHRRIKKLKTEKVD) adopt a coiled-coil conformation. A Glycyl lysine isopeptide (Lys-Gly) (interchain with G-Cter in SUMO2) cross-link involves residue Lys-283. A phosphoserine mark is found at Ser-421 and Ser-424. Over residues 449-458 (ASFTESRGLQ) the composition is skewed to polar residues. Position 481 is a phosphothreonine (Thr-481). Ser-493 bears the Phosphoserine mark. Residues 526 to 535 (NSRSTPTTPQ) are compositionally biased toward polar residues. A C2H2-type zinc finger spans residues 553-578 (IDCPHPNCNKKYKHINGLRYHQAHAH). 3 disordered regions span residues 622 to 665 (LKAP…KKKG), 713 to 750 (DKEKGKKATNCKTDKNLSKLKSARPIAPAPAPTPPQLI), and 777 to 858 (QATP…KDHL). Position 627 is a phosphoserine (Ser-627). Basic and acidic residues predominate over residues 713–729 (DKEKGKKATNCKTDKNL). The segment covering 781–790 (KSPPLKPIQP) has biased composition (pro residues). A Phosphoserine modification is found at Ser-782. The span at 818–858 (KLKDKEGKETGSPKMDAKLGKLEDSKGASKDLPGHFLKDHL) shows a compositional bias: basic and acidic residues. Residue Lys-880 forms a Glycyl lysine isopeptide (Lys-Gly) (interchain with G-Cter in SUMO2) linkage. A Phosphoserine modification is found at Ser-895. A compositionally biased stretch (polar residues) spans 925–934 (NGAESSAAKT). Disordered regions lie at residues 925 to 996 (NGAE…HSPY) and 1011 to 1066 (PGQV…HQSV). The segment covering 960–973 (SKASSPSDIISSKD) has biased composition (low complexity). Ser-964 is modified (phosphoserine). The span at 979-989 (HSSTTAQSSQL) shows a compositional bias: polar residues. Residues 1030–1054 (IKKESEEDAEKKDKAEQLDSKKVDH) show a composition bias toward basic and acidic residues. The span at 1055 to 1066 (NSASLQPQHQSV) shows a compositional bias: polar residues. Ser-1098 carries the phosphoserine modification. A disordered region spans residues 1117 to 1192 (QKMAQTGRGD…SQLLSNHQQQ (76 aa)). Lys-1118 is covalently cross-linked (Glycyl lysine isopeptide (Lys-Gly) (interchain with G-Cter in SUMO2)). Basic and acidic residues predominate over residues 1125 to 1145 (GDCERKSELPLKELGKEETKQ). Polar residues predominate over residues 1146–1157 (KNMPSATISKAP). Residues Lys-1176 and Lys-1182 each participate in a glycyl lysine isopeptide (Lys-Gly) (interchain with G-Cter in SUMO2) cross-link. Residues 1183 to 1192 (SQLLSNHQQQ) show a composition bias toward low complexity. Glycyl lysine isopeptide (Lys-Gly) (interchain with G-Cter in SUMO2) cross-links involve residues Lys-1199, Lys-1216, Lys-1234, and Lys-1250. The disordered stretch occupies residues 1220 to 1335 (DSMKQTGVDP…RGTRVAVSSP (116 aa)). Over residues 1231–1241 (SRFKQDPDSRT) the composition is skewed to basic and acidic residues. 2 stretches are compositionally biased toward basic and acidic residues: residues 1253–1276 (DQQKSEELDREKKLKEDSPRKTPN) and 1291–1327 (IKEEPKEAKHPDSQSMEESKLKNDDRKTPVNWKDSRG). Residues Lys-1292, Lys-1310, and Lys-1414 each participate in a glycyl lysine isopeptide (Lys-Gly) (interchain with G-Cter in SUMO2) cross-link. The disordered stretch occupies residues 1423–1459 (ANQYRSKSPAPVEKATAEREREAERERDRHSPFGQRH). Basic and acidic residues predominate over residues 1437–1453 (ATAEREREAERERDRHS).

Functionally, transcription factor, which represses ZNF609 transcription. The sequence is that of Zinc finger protein 608 (ZNF608) from Homo sapiens (Human).